Reading from the N-terminus, the 521-residue chain is Glycogen synthase (521 aa).

Position 18 (K18) interacts with ADP-alpha-D-glucose.

This sequence belongs to the glycosyltransferase 1 family. Bacterial/plant glycogen synthase subfamily.

It carries out the reaction [(1-&gt;4)-alpha-D-glucosyl](n) + ADP-alpha-D-glucose = [(1-&gt;4)-alpha-D-glucosyl](n+1) + ADP + H(+). It functions in the pathway glycan biosynthesis; glycogen biosynthesis. Synthesizes alpha-1,4-glucan chains using ADP-glucose. This chain is Glycogen synthase, found in Bordetella petrii (strain ATCC BAA-461 / DSM 12804 / CCUG 43448).